The following is a 101-amino-acid chain: Urease subunit beta (101 aa).

Belongs to the urease beta subunit family. As to quaternary structure, heterotrimer of UreA (gamma), UreB (beta) and UreC (alpha) subunits. Three heterotrimers associate to form the active enzyme.

It localises to the cytoplasm. The catalysed reaction is urea + 2 H2O + H(+) = hydrogencarbonate + 2 NH4(+). It functions in the pathway nitrogen metabolism; urea degradation; CO(2) and NH(3) from urea (urease route): step 1/1. The protein is Urease subunit beta of Rhizobium etli (strain ATCC 51251 / DSM 11541 / JCM 21823 / NBRC 15573 / CFN 42).